Here is a 340-residue protein sequence, read N- to C-terminus: Sideroflexin-5 (340 aa).

Transmembrane regions (helical) follow at residues 103 to 123 (IFMP…VVGL), 163 to 183 (FIQG…GLNV), 254 to 274 (LTRV…MSML), and 287 to 307 (LLPV…PLAI).

Belongs to the sideroflexin family. Primarily expressed in the brain.

It is found in the mitochondrion inner membrane. It carries out the reaction citrate(in) = citrate(out). In terms of biological role, mitochondrial amino-acid transporter. Transports citrate. Does not act as a serine transporter: not able to mediate transport of serine into mitochondria. In brown adipose tissue, plays a role in the regulation of UCP1-dependent thermogenesis probably by supporting mitochondrial glycerol-3-phosphate utilization. In Homo sapiens (Human), this protein is Sideroflexin-5.